A 243-amino-acid chain; its full sequence is Thiocyanate hydrolase subunit gamma (243 aa).

4 residues coordinate Co(3+): cysteine 128, cysteine 131, serine 132, and cysteine 133. Residue cysteine 131 is modified to Cysteine sulfinic acid (-SO2H). At cysteine 133 the chain carries Cysteine sulfenic acid (-SOH).

This sequence belongs to the nitrile hydratase subunit alpha family. Heterododecamer consisting of 4 alpha, 4 beta, and 4 gamma subunits. The cofactor is Co(3+).

It catalyses the reaction thiocyanate + H2O + 2 H(+) = carbonyl sulfide + NH4(+). It participates in organosulfur degradation; thiocyanate degradation. Its function is as follows. Involved in the degradation of thiocyanate. This chain is Thiocyanate hydrolase subunit gamma (scnC), found in Thiobacillus thioparus.